A 154-amino-acid polypeptide reads, in one-letter code: uncharacterized protein (154 aa).

Transmembrane regions (helical) follow at residues 20–42, 62–84, 91–109, and 113–132; these read FRLF…GQFG, FFGY…AVLL, ALGA…LINY, and IGVQ…LLWM.

It localises to the cell membrane. This is an uncharacterized protein from Bacillus subtilis (strain 168).